A 426-amino-acid polypeptide reads, in one-letter code: Mediator of RNA polymerase II transcription subunit 1 (426 aa).

Residues 319–349 are disordered; sequence ISTSNSGSVQPKPRRKSSVLSNRRPSMTDSM. The span at 336 to 347 shows a compositional bias: polar residues; the sequence is SVLSNRRPSMTD.

It belongs to the Mediator complex subunit 1 family. In terms of assembly, component of the Mediator complex.

The protein localises to the nucleus. In terms of biological role, component of the Mediator complex, a coactivator involved in the regulated transcription of nearly all RNA polymerase II-dependent genes. Mediator functions as a bridge to convey information from gene-specific regulatory proteins to the basal RNA polymerase II transcription machinery. Mediator is recruited to promoters by direct interactions with regulatory proteins and serves as a scaffold for the assembly of a functional preinitiation complex with RNA polymerase II and the general transcription factors. This chain is Mediator of RNA polymerase II transcription subunit 1 (MED1), found in Kluyveromyces lactis (strain ATCC 8585 / CBS 2359 / DSM 70799 / NBRC 1267 / NRRL Y-1140 / WM37) (Yeast).